The following is a 394-amino-acid chain: Chorismate synthase (394 aa).

Positions 40 and 46 each coordinate NADP(+). Residues 135 to 137, 255 to 256, Gly302, 317 to 321, and Arg343 contribute to the FMN site; these read RAS, QA, and KPISS.

This sequence belongs to the chorismate synthase family. As to quaternary structure, homotetramer. FMNH2 is required as a cofactor.

The enzyme catalyses 5-O-(1-carboxyvinyl)-3-phosphoshikimate = chorismate + phosphate. Its pathway is metabolic intermediate biosynthesis; chorismate biosynthesis; chorismate from D-erythrose 4-phosphate and phosphoenolpyruvate: step 7/7. Its function is as follows. Catalyzes the anti-1,4-elimination of the C-3 phosphate and the C-6 proR hydrogen from 5-enolpyruvylshikimate-3-phosphate (EPSP) to yield chorismate, which is the branch point compound that serves as the starting substrate for the three terminal pathways of aromatic amino acid biosynthesis. This reaction introduces a second double bond into the aromatic ring system. The polypeptide is Chorismate synthase (Frankia alni (strain DSM 45986 / CECT 9034 / ACN14a)).